The following is a 464-amino-acid chain: Putative protein TIC 214 C-terminal part (464 aa).

This sequence belongs to the TIC214 family. In terms of assembly, part of the Tic complex.

It localises to the plastid. The protein localises to the chloroplast. Its function is as follows. Involved in protein precursor import into chloroplasts. May be part of an intermediate translocation complex acting as a protein-conducting channel at the inner envelope. The protein is Putative protein TIC 214 C-terminal part of Marchantia polymorpha (Common liverwort).